The chain runs to 320 residues: Tabersonine synthase (320 aa).

Positions 78 to 80 match the Involved in the stabilization of the negatively charged intermediate by the formation of the oxyanion hole motif; it reads HGA. Glycine 81 contributes to the (-)-tabersonine binding site. Serine 170 serves as the catalytic Proton acceptor. The active site involves aspartate 266. Tyrosine 297 provides a ligand contact to (-)-tabersonine. Tyrosine 297 functions as the Proton donor/acceptor in the catalytic mechanism.

Belongs to the 'GDXG' lipolytic enzyme family. In terms of assembly, interacts with dehydroprecondylocarpine acetate synthase (DPAS). Expressed in leaf epidermis.

The protein localises to the cytoplasm. It localises to the cytosol. The protein resides in the nucleus. The catalysed reaction is dehydrosecodine = (-)-tabersonine. It carries out the reaction dihydroprecondylocarpine acetate = (-)-tabersonine + acetate + H(+). The protein operates within alkaloid biosynthesis. In terms of biological role, component of iboga and aspidosperma monoterpenoid indole alkaloids (MIAs, e.g. tabersonine and catharanthine) biosynthesis pathway from 19E-geissoschizine, psychoactive compounds likely to be used in the treatment of opioid dependence. Catalyzes the conversion of dehydrosecodine to tabersonine, a precursor of vindoline; this process starts with the conversion of dihydroprecondylocarpine acetate to dehydrosecodine. The sequence is that of Tabersonine synthase from Catharanthus roseus (Madagascar periwinkle).